The following is a 126-amino-acid chain: UPF0047 protein AF_2050 (126 aa).

It belongs to the UPF0047 family.

This is UPF0047 protein AF_2050 from Archaeoglobus fulgidus (strain ATCC 49558 / DSM 4304 / JCM 9628 / NBRC 100126 / VC-16).